We begin with the raw amino-acid sequence, 681 residues long: MSTDNLFEDIEQDNNPSFYGNPSILNDPYRPIQPPPPQQQQQQHQENESKQSHTKSPKPPLQSIHSGTSNAHPQSQPQHKHKHKHNTSLNNGYPNELVNSTIGLSNRILELLNDSQLQVDIINSEKLVNSSVIVYTIELSSPTTKIVVKRRYSEFKSLRDNLLKLFPTLIIPPIPEKHSILSYLLNTINHSHEISIIEMRKRYFKMFLDDLIFQSDYKLKNCPLLHKFFDPNYELCWYNALNEPPVSLIPDNLLLANPINPADQNGLYSLLPIVNGFDFNSHIDNLSNLKKINEDLYKLNDQVKLYELKGFEQDLEFSIPEELIQFEIKFHQTIKILTDLNKLNSKTTKNYKSMVDTLIDLGGNLNNFSLQVYQQKSGSNNELSEAIEKFGSTMDQSFLNFESFILNQLVPQWQEPVDQLILYLQNSLGLIKFYKYKIVQFKILYKLKFNKFQQLINLTNIGGVSSSGSGGGGLLASRISTDNDSNNSNNSGNNNNDGDLDTENFDHLKELNSPTINNALKNLSTKKISKKSSWYGLFGGNNQTKKFNFQLPIEEPTTATGSTEQQSQQQSAPNSPQREQQQQQSQSQSHHSHQTSIRFKLNHIEKELNKLNQLIELCNQDMHKLTEALVNTFEEFLSKIERKWLQLMITYIQNCKNMFEANLTNWKEFKESLVNETREVN.

The span at 1–12 shows a compositional bias: acidic residues; that stretch reads MSTDNLFEDIEQ. Residues 1 to 94 form a disordered region; that stretch reads MSTDNLFEDI…HNTSLNNGYP (94 aa). The span at 13 to 24 shows a compositional bias: polar residues; the sequence is DNNPSFYGNPSI. In terms of domain architecture, PX spans 113–236; it reads NDSQLQVDII…KFFDPNYELC (124 aa). Positions 151, 153, 177, and 200 each coordinate a 1,2-diacyl-sn-glycero-3-phospho-(1D-myo-inositol-3-phosphate). Disordered stretches follow at residues 475–505 and 558–597; these read LASR…TENF and TATG…QTSI. Low complexity-rich tracts occupy residues 482-497 and 558-589; these read DNDS…NNND and TATG…QSQS.

Belongs to the sorting nexin family.

The protein localises to the endosome membrane. It is found in the endomembrane system. Functionally, may be required for cytoplasm to vacuole transport (Cvt) and pexophagy. The chain is Sorting nexin-41 (SNX41) from Candida albicans (strain SC5314 / ATCC MYA-2876) (Yeast).